Here is a 434-residue protein sequence, read N- to C-terminus: MEKSVNVIGAGLAGSEAAWQLVKRGVKVDLYEMRPVKQTPAHHTDKFAELVCTNSLRANGLTNAVGVIKEEMRLLDSIIIESADKASVPAGGALAVDRHEFSGYITDKVKNHPLVTIHTEEVTSIPEGPTIIATGPLTSPALAEEIKRLTGEEYLYFYDAAAPIIEKDSIDMDKVYLKSRYDKGEAAYLNCPMSEEEFNTFYEALVTAETAALKEFEKEVFFEGCMPIEVMAKRGIKTMLFGPLKPVGLEDPKTGKRPYAVLQLRQDDAAGTLYNMVGFQTHLKWGEQKRVFGLIPGLENAEIVRYGVMHRNTFINSPTVLEPTYQLKTRNDLFFAGQMTGVEGYVESAASGLAAGINAANFVQDKEPIVFPPESAIGSLANYITSASKKSFQPMNVNFGLFPELPTKIRAKQERNEKLAERALDAIKKVAEQL.

Residue 9–14 (GAGLAG) participates in FAD binding.

Belongs to the MnmG family. TrmFO subfamily. Requires FAD as cofactor.

It localises to the cytoplasm. It catalyses the reaction uridine(54) in tRNA + (6R)-5,10-methylene-5,6,7,8-tetrahydrofolate + NADH + H(+) = 5-methyluridine(54) in tRNA + (6S)-5,6,7,8-tetrahydrofolate + NAD(+). The catalysed reaction is uridine(54) in tRNA + (6R)-5,10-methylene-5,6,7,8-tetrahydrofolate + NADPH + H(+) = 5-methyluridine(54) in tRNA + (6S)-5,6,7,8-tetrahydrofolate + NADP(+). In terms of biological role, catalyzes the folate-dependent formation of 5-methyl-uridine at position 54 (M-5-U54) in all tRNAs. The chain is Methylenetetrahydrofolate--tRNA-(uracil-5-)-methyltransferase TrmFO from Listeria innocua serovar 6a (strain ATCC BAA-680 / CLIP 11262).